The sequence spans 109 residues: UPF0235 protein MA_4097 (109 aa).

Belongs to the UPF0235 family.

The polypeptide is UPF0235 protein MA_4097 (Methanosarcina acetivorans (strain ATCC 35395 / DSM 2834 / JCM 12185 / C2A)).